The following is an 885-amino-acid chain: DNA mismatch repair protein MutS (885 aa).

Residue 640–647 (GPNMGGKS) coordinates ATP.

The protein belongs to the DNA mismatch repair MutS family.

This protein is involved in the repair of mismatches in DNA. It is possible that it carries out the mismatch recognition step. This protein has a weak ATPase activity. This chain is DNA mismatch repair protein MutS, found in Variovorax paradoxus (strain S110).